The primary structure comprises 536 residues: Serine protease inhibitor 28Dc (536 aa).

The signal sequence occupies residues 1 to 16 (MWRLLLALLLVSSVCC). Residue Asn-355 is glycosylated (N-linked (GlcNAc...) asparagine).

The protein belongs to the serpin family.

The protein localises to the secreted. In terms of biological role, serine protease inhibitor which is required for pupal viability and plays an essential role in regulating the melanization reaction. Inhibits spontaneous melanization and appears to be involved in the melanization immune response to physical wounding in larvae and adults. Acts by negatively regulating the Hayan-phenoloxidase (PPO1) cascade in the hemolymph and possibly the trachea. May function by controlling the initial release of the activated form of PPO1, phenoloxidase (PO) and thus maintains PO availability for processes such as wound response and pigmentation. This chain is Serine protease inhibitor 28Dc, found in Drosophila melanogaster (Fruit fly).